Reading from the N-terminus, the 250-residue chain is Probable transcriptional regulatory protein Nther_1800 (250 aa).

Belongs to the TACO1 family.

The protein resides in the cytoplasm. In Natranaerobius thermophilus (strain ATCC BAA-1301 / DSM 18059 / JW/NM-WN-LF), this protein is Probable transcriptional regulatory protein Nther_1800.